Consider the following 298-residue polypeptide: 4-hydroxy-tetrahydrodipicolinate synthase (298 aa).

A pyruvate-binding site is contributed by T48. Y137 functions as the Proton donor/acceptor in the catalytic mechanism. K166 functions as the Schiff-base intermediate with substrate in the catalytic mechanism. I207 is a binding site for pyruvate.

This sequence belongs to the DapA family. Homotetramer; dimer of dimers.

The protein localises to the cytoplasm. The enzyme catalyses L-aspartate 4-semialdehyde + pyruvate = (2S,4S)-4-hydroxy-2,3,4,5-tetrahydrodipicolinate + H2O + H(+). The protein operates within amino-acid biosynthesis; L-lysine biosynthesis via DAP pathway; (S)-tetrahydrodipicolinate from L-aspartate: step 3/4. In terms of biological role, catalyzes the condensation of (S)-aspartate-beta-semialdehyde [(S)-ASA] and pyruvate to 4-hydroxy-tetrahydrodipicolinate (HTPA). In Campylobacter jejuni subsp. jejuni serotype O:6 (strain 81116 / NCTC 11828), this protein is 4-hydroxy-tetrahydrodipicolinate synthase.